A 453-amino-acid chain; its full sequence is Serine/threonine-protein phosphatase 2A 55 kDa regulatory subunit B delta isoform (453 aa).

4 WD repeats span residues 32 to 71 (AEAD…KGRA), 97 to 138 (EIEE…KRAE), 181 to 219 (AHTY…RSFN), and 230 to 270 (ELTE…LCDR). A Phosphoserine modification is found at serine 285. WD repeat units lie at residues 289–327 (EIIS…RPVE), 344–385 (ENDC…DVTL), and 420–452 (DFNK…QDKI). Residue tyrosine 305 is modified to Phosphotyrosine. Position 308 is a phosphothreonine (threonine 308). The segment at 385–406 (LEASRENSKPRASLKPRKVCSG) is disordered.

This sequence belongs to the phosphatase 2A regulatory subunit B family. PP2A consists of a common heterodimeric core enzyme, composed of a 36 kDa catalytic subunit (subunit C) and a 65 kDa constant regulatory subunit (PR65 or subunit A), that associates with a variety of regulatory subunits. Proteins that associate with the core dimer include three families of regulatory subunits B (the R2/B/PR55/B55, R3/B''/PR72/PR130/PR59 and R5/B'/B56 families), the 48 kDa variable regulatory subunit, viral proteins, and cell signaling molecules. Interacts with ENSA (when phosphorylated at 'Ser-67') and ARPP19 (when phosphorylated at 'Ser-62'), leading to inhibit PP2A activity. Interacts with IER5. As to expression, widely expressed with high levels in brain, heart, placenta, skeletal muscle, testis, thymus and spleen.

It localises to the cytoplasm. Functionally, substrate-recognition subunit of protein phosphatase 2A (PP2A) that plays a key role in cell cycle by controlling mitosis entry and exit. Involved in chromosome clustering during late mitosis by mediating dephosphorylation of MKI67. The activity of PP2A complexes containing PPP2R2D (PR55-delta) fluctuate during the cell cycle: the activity is high in interphase and low in mitosis. The sequence is that of Serine/threonine-protein phosphatase 2A 55 kDa regulatory subunit B delta isoform (Ppp2r2d) from Rattus norvegicus (Rat).